The sequence spans 139 residues: 3-hydroxyacyl-[acyl-carrier-protein] dehydratase FabZ (139 aa).

Residue His-46 is part of the active site.

The protein belongs to the thioester dehydratase family. FabZ subfamily.

The protein localises to the cytoplasm. The enzyme catalyses a (3R)-hydroxyacyl-[ACP] = a (2E)-enoyl-[ACP] + H2O. In terms of biological role, involved in unsaturated fatty acids biosynthesis. Catalyzes the dehydration of short chain beta-hydroxyacyl-ACPs and long chain saturated and unsaturated beta-hydroxyacyl-ACPs. The polypeptide is 3-hydroxyacyl-[acyl-carrier-protein] dehydratase FabZ (Streptococcus pyogenes serotype M3 (strain ATCC BAA-595 / MGAS315)).